Here is a 445-residue protein sequence, read N- to C-terminus: Phosphoglucosamine mutase (445 aa).

Ser102 functions as the Phosphoserine intermediate in the catalytic mechanism. Ser102, Asp240, Asp242, and Asp244 together coordinate Mg(2+). The residue at position 102 (Ser102) is a Phosphoserine.

Belongs to the phosphohexose mutase family. Requires Mg(2+) as cofactor. Activated by phosphorylation.

It catalyses the reaction alpha-D-glucosamine 1-phosphate = D-glucosamine 6-phosphate. In terms of biological role, catalyzes the conversion of glucosamine-6-phosphate to glucosamine-1-phosphate. The chain is Phosphoglucosamine mutase from Mycobacterium marinum (strain ATCC BAA-535 / M).